A 312-amino-acid chain; its full sequence is MAAGQNGHEEWVGSAYLFVESSLDKVVLSDAYAHPQQKVAVYRALQAALAESGGSPDVLQMLKIHRSDPQLIVQLRFCGRQPCGRFLRAYREGALRAALQRSLAAALAQHSVPLQLELRAGAERLDALLADEERCLSCILAQQPDRLRDEELAELEDALRNLKCGSGARGGDGEVASAPLQPPVPSLSEVKPPPPPPPAQTFLFQGQPVVNRPLSLKDQQTFARSVGLKWRKVGRSLQRGCRALRDPALDSLAYEYEREGLYEQAFQLLRRFVQAEGRRATLQRLVEALEENELTSLAEDLLGLTDPNGGLA.

A Nuclear export signal motif is present at residues 147-163; the sequence is LRDEELAELEDALRNLK. Positions 170–195 are disordered; sequence GGDGEVASAPLQPPVPSLSEVKPPPP. Residues 179–289 form the Death domain; that stretch reads PLQPPVPSLS…ATLQRLVEAL (111 aa). Positions 180 to 195 are enriched in pro residues; the sequence is LQPPVPSLSEVKPPPP. An interaction with KRT14 and KRT18 region spans residues 222–289; sequence FARSVGLKWR…ATLQRLVEAL (68 aa). The Nuclear localization signal motif lies at 231–244; that stretch reads RKVGRSLQRGCRAL. (Microbial infection) N-beta-linked (GlcNAc) arginine glycans are attached at residues arginine 235 and arginine 245.

Stimulation of TNF-alpha receptor TNFRSF1A leads to the formation of two distinct signaling complexes. Plasma membrane-bound complex I is composed of TNFRSF1A, TRADD, RIPK1, TRAF2 and BIRC2/c-IAP1 or BIRC3 which interacts with CHUCK/IKK-alpha, IKBKB/IKK-beta and IKBKG/IKK-gamma promoting cell survival. Subsequently, TRADD, RIPK1 and TRAF2 dissociate from TNFRSF1A and form cytoplasmic complex II with FADD and caspase CASP8 promoting cell apoptosis. Within complex I, interacts with TNFRSF1A/TNFR1, TRAF2 and kinase RIPK1. Within complex I, interacts with TRPC4AP; the interaction promotes NF-kappa B activation. UXT1 associates with complex I; the interaction prevents the formation of complex II. Within complex I Interacts with scaffold protein DAB2IP. Interacts with autophagy receptor SQSTM1. Interacts with E3 ligase TRIP12. Interacts with kinase HIPK2. Interacts with keratin KRT14. Interacts with keratin KRT18. Interacts with keratins KRT16 and KRT17. Interacts with FADD. Interacts with TOMM70. Interacts with TMC8; the interaction impairs the formation of complex I and facilites complex II formation. (Microbial infection) Glycosylated at Arg-235 by enteropathogenic E.coli protein NleB1, C.rodentium protein NleB and S.typhimurium proteins Ssek1 and Ssek3: arginine GlcNAcylation prevents homotypic/heterotypic death domain interactions and assembly of the oligomeric TNFRSF1A/TNFR1 complex, thereby disrupting TNF signaling. As to expression, found in all examined tissues.

The protein localises to the nucleus. It is found in the cytoplasm. It localises to the cytoskeleton. Adapter molecule for TNFRSF1A/TNFR1 that specifically associates with the cytoplasmic domain of activated TNFRSF1A/TNFR1 mediating its interaction with FADD. Overexpression of TRADD leads to two major TNF-induced responses, apoptosis and activation of NF-kappa-B. The nuclear form acts as a tumor suppressor by preventing ubiquitination and degradation of isoform p19ARF/ARF of CDKN2A by TRIP12: acts by interacting with TRIP12, leading to disrupt interaction between TRIP12 and isoform p19ARF/ARF of CDKN2A. The sequence is that of Tumor necrosis factor receptor type 1-associated DEATH domain protein from Homo sapiens (Human).